A 262-amino-acid polypeptide reads, in one-letter code: 4-hydroxy-2-oxo-heptane-1,7-dioate aldolase (262 aa).

Catalysis depends on His45, which acts as the Proton acceptor. Gln147 lines the substrate pocket. Glu149 provides a ligand contact to a divalent metal cation. Substrate-binding residues include Ala174 and Asp175. Asp175 contributes to the a divalent metal cation binding site.

The protein belongs to the HpcH/HpaI aldolase family. In terms of assembly, homohexamer; trimer of dimers. A divalent metal cation is required as a cofactor.

It carries out the reaction 4-hydroxy-2-oxoheptanedioate = succinate semialdehyde + pyruvate. The enzyme catalyses D-glyceraldehyde + 3-hydroxypyruvate = (3R,4S,5R)-3,4,5,6-tetrahydroxy-2-oxohexanoate. It catalyses the reaction D-glyceraldehyde + 3-hydroxypyruvate = 2-dehydro-D-gluconate. The catalysed reaction is D-glyceraldehyde + 3-hydroxypyruvate = 2-dehydro-D-galactonate. It carries out the reaction D-glyceraldehyde + pyruvate = 2-dehydro-3-deoxy-L-galactonate. The enzyme catalyses 2-dehydro-3-deoxy-D-gluconate = D-glyceraldehyde + pyruvate. The protein operates within aromatic compound metabolism; 4-hydroxyphenylacetate degradation; pyruvate and succinate semialdehyde from 4-hydroxyphenylacetate: step 7/7. Functionally, catalyzes the reversible retro-aldol cleavage of 4-hydroxy-2-ketoheptane-1,7-dioate (HKHD) to pyruvate and succinic semialdehyde. In vitro, can catalyze the aldolisation reaction between hydroxypyruvate (HPA) or pyruvate (PA) and D-glyceraldehyde (D-GA). The condensation of hydroxypyruvate and D-glyceraldehyde produces (3R,4S,5R)-3,4,5,6-tetrahydroxy-2-oxohexanoate as the major product, 2-dehydro-D-gluconate and 2-dehydro-D-galactonate. The condensation of pyruvate and D-glyceraldehyde produces 2-dehydro-3-deoxy-L-galactonate as the major product and 2-dehydro-3-deoxy-D-gluconate. In Escherichia coli (strain ATCC 8739 / DSM 1576 / NBRC 3972 / NCIMB 8545 / WDCM 00012 / Crooks), this protein is 4-hydroxy-2-oxo-heptane-1,7-dioate aldolase.